The primary structure comprises 255 residues: Sporulation-specific N-acetylmuramoyl-L-alanine amidase (255 aa).

Residues 4-172 form the MurNAc-LAA domain; that stretch reads IFIDPGHGGS…LARGHANGLE (169 aa). Zn(2+)-binding residues include histidine 10, glutamate 24, and histidine 79. Glutamate 141 is an active-site residue. Residues 180 to 254 enclose the SPOR domain; that stretch reads TSSSGLYKVQ…AGFDAIVILE (75 aa). A run of 2 repeats spans residues 184 to 219 and 220 to 255. Residues 184 to 255 form a 2 X 35 AA approximate tandem repeats region; it reads GLYKVQIGAF…GFDAIVILES (72 aa).

Belongs to the N-acetylmuramoyl-L-alanine amidase 3 family. The cofactor is Zn(2+).

Its subcellular location is the secreted. The protein localises to the cell wall. The enzyme catalyses Hydrolyzes the link between N-acetylmuramoyl residues and L-amino acid residues in certain cell-wall glycopeptides.. Its activity is regulated as follows. Inhibited by EDTA. Its function is as follows. Autolysins are involved in some important biological processes such as cell separation, cell-wall turnover, competence for genetic transformation, formation of the flagella - in particular of its basal body - and sporulation. CwlC is able to hydrolyze type A cell walls such as B.subtilis. Its main function is to lyze the mother cell wall peptidoglycan, playing a role during sporulation. The sequence is that of Sporulation-specific N-acetylmuramoyl-L-alanine amidase (cwlC) from Bacillus subtilis (strain 168).